The chain runs to 289 residues: Protoheme IX farnesyltransferase (289 aa).

9 helical membrane passes run 13–33 (LIKP…LYLA), 40–60 (VFLI…SFIF), 85–105 (ISIP…FYML), 111–131 (LLTA…YTIF), 139–159 (NIVI…AAIG), 168–188 (ILFT…AIFL), 212–232 (SIFF…FLEP), 234–254 (MGLL…ILSY), and 269–289 (FLFS…DHMI).

The protein belongs to the UbiA prenyltransferase family. Protoheme IX farnesyltransferase subfamily.

Its subcellular location is the cell inner membrane. The catalysed reaction is heme b + (2E,6E)-farnesyl diphosphate + H2O = Fe(II)-heme o + diphosphate. It functions in the pathway porphyrin-containing compound metabolism; heme O biosynthesis; heme O from protoheme: step 1/1. Its function is as follows. Converts heme B (protoheme IX) to heme O by substitution of the vinyl group on carbon 2 of heme B porphyrin ring with a hydroxyethyl farnesyl side group. The polypeptide is Protoheme IX farnesyltransferase (Leptospira borgpetersenii serovar Hardjo-bovis (strain JB197)).